We begin with the raw amino-acid sequence, 214 residues long: Small ribosomal subunit protein uS3c (214 aa).

In terms of domain architecture, KH type-2 spans 39–111; that stretch reads IRTYIHTISK…QLTINVLEVE (73 aa).

This sequence belongs to the universal ribosomal protein uS3 family. In terms of assembly, part of the 30S ribosomal subunit.

Its subcellular location is the plastid. The protein resides in the chloroplast. In Phaeodactylum tricornutum (strain CCAP 1055/1), this protein is Small ribosomal subunit protein uS3c (rps3).